Consider the following 126-residue polypeptide: uncharacterized protein (126 aa).

Residues 13 to 45 (VAPKAGREEEQPPPPAGLGCGARGEPGRGPLEH) are disordered.

It localises to the cytoplasm. It is found in the cytoskeleton. The protein resides in the cilium basal body. This is an uncharacterized protein from Homo sapiens (Human).